The chain runs to 338 residues: Aspartate carbamoyltransferase catalytic subunit (338 aa).

Positions 57 and 58 each coordinate carbamoyl phosphate. Lysine 86 contacts L-aspartate. Carbamoyl phosphate-binding residues include arginine 107, histidine 135, and glutamine 138. Positions 172 and 234 each coordinate L-aspartate. 2 residues coordinate carbamoyl phosphate: leucine 274 and proline 275.

The protein belongs to the aspartate/ornithine carbamoyltransferase superfamily. ATCase family. Heterododecamer (2C3:3R2) of six catalytic PyrB chains organized as two trimers (C3), and six regulatory PyrI chains organized as three dimers (R2).

It carries out the reaction carbamoyl phosphate + L-aspartate = N-carbamoyl-L-aspartate + phosphate + H(+). Its pathway is pyrimidine metabolism; UMP biosynthesis via de novo pathway; (S)-dihydroorotate from bicarbonate: step 2/3. Functionally, catalyzes the condensation of carbamoyl phosphate and aspartate to form carbamoyl aspartate and inorganic phosphate, the committed step in the de novo pyrimidine nucleotide biosynthesis pathway. The sequence is that of Aspartate carbamoyltransferase catalytic subunit from Cellvibrio japonicus (strain Ueda107) (Pseudomonas fluorescens subsp. cellulosa).